The following is a 304-amino-acid chain: PTB domain-containing engulfment adapter protein 1 (304 aa).

T16 carries the post-translational modification Phosphothreonine. The PID domain maps to 21-176 (SKHFIPYNAK…AGLQKRIQDL (156 aa)). Residues 158-202 (KDVETRKQIAGLQKRIQDLETENMELKNKVQDLENQLRITQVSAP) adopt a coiled-coil conformation. S223 is subject to Phosphoserine. Residues 223 to 246 (SPISHQSSMPTRNGTQPPPVPSRS) are disordered. Residues 225–237 (ISHQSSMPTRNGT) are compositionally biased toward polar residues.

Belongs to the ced-6 family. As to quaternary structure, homodimer. Interacts with clathrin. Interacts with GDP-bound ARF6, but not with GTP-bound ARF6. Part of a complex composed of GULP1, ACAP1 and ARF6. Interacts with ACAP1, LRP1, MEGF10 and STAB2. As to expression, widely expressed. Detected in macrophages, pancreas, kidney, skeletal muscle, heart, colon, intestine, lung, placenta and ovary.

It is found in the cytoplasm. May function as an adapter protein. Required for efficient phagocytosis of apoptotic cells. Modulates cellular glycosphingolipid and cholesterol transport. May play a role in the internalization and endosomal trafficking of various LRP1 ligands, such as PSAP. Increases cellular levels of GTP-bound ARF6. This is PTB domain-containing engulfment adapter protein 1 (GULP1) from Homo sapiens (Human).